Reading from the N-terminus, the 499-residue chain is D-alanine--D-alanyl carrier protein ligase (499 aa).

Residue 152 to 153 (TS) coordinates ATP. D-alanine is bound at residue Asp-197. ATP is bound by residues 292-297 (NTYGPT), Asp-372, 384-387 (YQGR), and Lys-485. Residue Lys-485 coordinates D-alanine.

This sequence belongs to the ATP-dependent AMP-binding enzyme family. DltA subfamily.

The protein localises to the cytoplasm. The catalysed reaction is holo-[D-alanyl-carrier protein] + D-alanine + ATP = D-alanyl-[D-alanyl-carrier protein] + AMP + diphosphate. The protein operates within cell wall biogenesis; lipoteichoic acid biosynthesis. Its function is as follows. Catalyzes the first step in the D-alanylation of lipoteichoic acid (LTA), the activation of D-alanine and its transfer onto the D-alanyl carrier protein (Dcp) DltC. In an ATP-dependent two-step reaction, forms a high energy D-alanyl-AMP intermediate, followed by transfer of the D-alanyl residue as a thiol ester to the phosphopantheinyl prosthetic group of the Dcp. D-alanylation of LTA plays an important role in modulating the properties of the cell wall in Gram-positive bacteria, influencing the net charge of the cell wall. The protein is D-alanine--D-alanyl carrier protein ligase of Lactococcus lactis subsp. lactis (strain IL1403) (Streptococcus lactis).